Consider the following 93-residue polypeptide: Alpha-defensin 22 (93 aa).

The first 19 residues, Met-1–Thr-19, serve as a signal peptide directing secretion. Residues Asp-20–Leu-58 constitute a propeptide that is removed on maturation. Residues Ile-22–Ala-41 are disordered. Positions Thr-25 to Gln-40 are enriched in acidic residues. Intrachain disulfides connect Cys-64–Cys-89, Cys-66–Cys-81, and Cys-71–Cys-88.

Belongs to the alpha-defensin family.

The protein localises to the secreted. May have microbicidal activities. In Mus musculus (Mouse), this protein is Alpha-defensin 22 (Defa22).